The following is a 1489-amino-acid chain: DEAD-box ATP-dependent DNA helicase Fancm (1489 aa).

A Helicase ATP-binding domain is found at 65–237 (IVQSALFKNT…AVCRNLYISN (173 aa)). Residue 78–85 (LPTGLGKT) coordinates ATP. Residues 185–188 (DEAH) carry the DEAH box motif. A Helicase C-terminal domain is found at 418-584 (KLRQVLVQHF…VVKLSLYEQN (167 aa)). Disordered stretches follow at residues 591-647 (KFQP…ESQQ), 980-1000 (VEES…ESNH), 1145-1182 (TETI…PQGK), 1196-1222 (VLPC…SIQE), 1255-1293 (NPTI…PQIA), and 1452-1489 (ERRK…VLID). Residues 594-610 (PKCEEKHMEPVAEEKPK) show a composition bias toward basic and acidic residues. Residues 611-625 (PKSAAKTKESRKRKQ) are compositionally biased toward basic residues. A compositionally biased stretch (polar residues) spans 985–998 (RSTPISIADSSGES). Residues 1149–1161 (KNSENKNSHEDGS) are compositionally biased toward basic and acidic residues. Positions 1480–1489 (SDEDDVVLID) are enriched in acidic residues.

Belongs to the DEAD box helicase family. DEAH subfamily. FANCM sub-subfamily.

It localises to the nucleus. The catalysed reaction is ATP + H2O = ADP + phosphate + H(+). It catalyses the reaction Couples ATP hydrolysis with the unwinding of duplex DNA by translocating in the 3'-5' direction.. Functionally, a ssDNA-dependent ATPase with 3' to 5' helicase activity. Involved in multiple DNA-damage responses, some that require ATPase and helicase activity and some that are independent of these. Involved in DNA interstrand cross-link repair, probably together with Fancl and other Fanconi anemia pathway homologs. Independent of Fancl involved in DNA double strand break repair, including contributing to the synthesis-dependent strand annealing (SDSA) pathway. Probably contributes to SDSA by unwinding short duplex regions in complex D-loop-like DNA structures. In Drosophila melanogaster (Fruit fly), this protein is DEAD-box ATP-dependent DNA helicase Fancm.